Consider the following 449-residue polypeptide: UDP-N-acetylmuramoylalanine--D-glutamate ligase (449 aa).

Residue 118-124 (GTNGKTT) participates in ATP binding.

This sequence belongs to the MurCDEF family.

Its subcellular location is the cytoplasm. The catalysed reaction is UDP-N-acetyl-alpha-D-muramoyl-L-alanine + D-glutamate + ATP = UDP-N-acetyl-alpha-D-muramoyl-L-alanyl-D-glutamate + ADP + phosphate + H(+). It participates in cell wall biogenesis; peptidoglycan biosynthesis. Functionally, cell wall formation. Catalyzes the addition of glutamate to the nucleotide precursor UDP-N-acetylmuramoyl-L-alanine (UMA). The polypeptide is UDP-N-acetylmuramoylalanine--D-glutamate ligase (Staphylococcus haemolyticus (strain JCSC1435)).